The primary structure comprises 512 residues: NAD(P)H-quinone oxidoreductase chain 4, chloroplastic (512 aa).

Helical transmembrane passes span 4–24, 34–54, 87–107, 111–131, 134–154, 167–187, 208–228, 242–262, 274–294, 308–328, 330–350, 374–396, 417–437, and 462–482; these read VPWL…IPLL, WYAL…FGCY, IGLI…AWPV, PKLF…LFAS, ILLF…LLSM, FILY…TASL, GLEI…LPAF, HYST…YGFI, TVFA…AALV, SSVS…DLGL, GAML…FLAG, MFAM…GFVS, IITL…LSMV, and VFVL…PNFA.

The protein belongs to the complex I subunit 4 family.

It is found in the plastid. The protein resides in the chloroplast thylakoid membrane. The catalysed reaction is a plastoquinone + NADH + (n+1) H(+)(in) = a plastoquinol + NAD(+) + n H(+)(out). It carries out the reaction a plastoquinone + NADPH + (n+1) H(+)(in) = a plastoquinol + NADP(+) + n H(+)(out). The polypeptide is NAD(P)H-quinone oxidoreductase chain 4, chloroplastic (Zygnema circumcarinatum (Green alga)).